We begin with the raw amino-acid sequence, 287 residues long: Inorganic pyrophosphatase (287 aa).

Residue R79 participates in diphosphate binding. Positions 116, 121, and 153 each coordinate Mg(2+).

Belongs to the PPase family. The cofactor is Mg(2+).

Its subcellular location is the cytoplasm. It carries out the reaction diphosphate + H2O = 2 phosphate + H(+). This is Inorganic pyrophosphatase (IPP1) from Candida glabrata (strain ATCC 2001 / BCRC 20586 / JCM 3761 / NBRC 0622 / NRRL Y-65 / CBS 138) (Yeast).